The sequence spans 354 residues: Uroporphyrinogen decarboxylase (354 aa).

Substrate is bound by residues 27-31, D77, Y153, T208, and H326; that span reads RQAGR.

Belongs to the uroporphyrinogen decarboxylase family. As to quaternary structure, homodimer.

It localises to the cytoplasm. The catalysed reaction is uroporphyrinogen III + 4 H(+) = coproporphyrinogen III + 4 CO2. Its pathway is porphyrin-containing compound metabolism; protoporphyrin-IX biosynthesis; coproporphyrinogen-III from 5-aminolevulinate: step 4/4. Functionally, catalyzes the decarboxylation of four acetate groups of uroporphyrinogen-III to yield coproporphyrinogen-III. The chain is Uroporphyrinogen decarboxylase from Neisseria meningitidis serogroup C / serotype 2a (strain ATCC 700532 / DSM 15464 / FAM18).